A 728-amino-acid polypeptide reads, in one-letter code: Sodium-dependent transporter snf-5 (728 aa).

Residues 1–84 lie on the Cytoplasmic side of the membrane; it reads MADSGSNEEA…PEEEEEKRDG (84 aa). A disordered region spans residues 1–84; sequence MADSGSNEEA…PEEEEEKRDG (84 aa). Low complexity-rich tracts occupy residues 29 to 50 and 60 to 73; these read QQVSQQSNQLSSQKSIQQSTQS and KNTTVTTTRPTLDT. A helical membrane pass occupies residues 85–105; sequence FGNSFEFVLTSLGLAVGLGNI. Residues glycine 97, alanine 99, valine 100, and asparagine 104 each contribute to the Na(+) site. At 106-119 the chain is on the extracellular side; sequence WRFPTRAYNNGGSA. A helical membrane pass occupies residues 120 to 140; that stretch reads FLIPYLTCAFLFGLPAVYFEF. Over 141-162 the chain is Cytoplasmic; that stretch reads LTGQYQGKSPPVIFRRVRPILE. Residues 163–183 form a helical membrane-spanning segment; the sequence is GVGWMGVFVAALVAIYYIVIV. Topologically, residues 184 to 285 are extracellular; the sequence is SWISIYMINI…PSSGMLDFGG (102 aa). Cysteine 204 and cysteine 214 form a disulfide bridge. N-linked (GlcNAc...) asparagine glycans are attached at residues asparagine 210, asparagine 225, asparagine 232, asparagine 237, and asparagine 257. A helical transmembrane segment spans residues 286 to 306; it reads FNWPVFAAMSVCWLLTGLGIL. Residues 307–314 are Cytoplasmic-facing; the sequence is KGAKIMGK. The helical transmembrane segment at 315–335 threads the bilayer; the sequence is ISYVSVLVPYVLVVVLFINGV. Topologically, residues 336–364 are extracellular; sequence FQDGSGVGLEMYFGTPNYTKLYEQDTWTE. Residue asparagine 352 is glycosylated (N-linked (GlcNAc...) asparagine). Residues 365-386 form a helical membrane-spanning segment; the sequence is ALKQLCFSLSVGHGGLISLSSY. Serine 372 contributes to the Na(+) binding site. At 387–396 the chain is on the cytoplasmic side; the sequence is SPKRNNIFRD. The helical transmembrane segment at 397–417 threads the bilayer; sequence ALIVIIGDTTMSLVGGGAVFA. The Extracellular segment spans residues 418-451; it reads TLGYLAKATGQDVKDVVKSGLSLAFVVYPEAMTR. The chain crosses the membrane as a helical span at residues 452-472; the sequence is MPVPWLWCFIFFLMLFLLGAS. Residue leucine 469 coordinates Na(+). The Cytoplasmic portion of the chain corresponds to 473–495; the sequence is TEIALVDVFCSCIYDQYPRFRNR. Residues 496–516 form a helical membrane-spanning segment; it reads KWIVVIAWCSVLYCIGLVFST. Residues 517-531 are Extracellular-facing; the sequence is RAGYYWFEMFDEYAA. The chain crosses the membrane as a helical span at residues 532–552; that stretch reads GFSSVCTVVCELLVMMYIYGF. The Cytoplasmic segment spans residues 553 to 578; that stretch reads RNVRDDITEVVGHARNKFTGAIGAHS. A helical transmembrane segment spans residues 579–599; the sequence is WYFTANWMVISPSIALILVGL. Residues 600–616 lie on the Extracellular side of the membrane; the sequence is SFVREYPYMGRHDIYPA. Residues 617–637 form a helical membrane-spanning segment; the sequence is VFDIFGWFLSFLPVIIVPIFM. Topologically, residues 638–728 are cytoplasmic; the sequence is LLNFIRCRNR…DTSSTYHQVY (91 aa). Over residues 687–699 the composition is skewed to acidic residues; sequence PWDEENVDLTDSE. The tract at residues 687–728 is disordered; the sequence is PWDEENVDLTDSESESRNAASGDVPIDDVATIDTSSTYHQVY. Over residues 718-728 the composition is skewed to polar residues; it reads IDTSSTYHQVY.

It belongs to the sodium:neurotransmitter symporter (SNF) (TC 2.A.22) family. Expressed in the INT-9 cells and posterior cells of the alimentary canal of the intestine, gut epithelial cells, the pharynx of some worms, two cells of the rectal gland, and in DVA, DVB and DVC neurons and amphid sensory neurons ASI, ADF and ASK neurons.

It localises to the cell membrane. Sodium-dependent amino acid transporter that mediates the uptake of the L-enantiomers of various amino acids, including L-proline and L-methionine, and also of acidic amino acids such as L-glutamic acid and L-aspartic acid. May additionally have a role in potassium-dependent amino acid absorption. In response to the availability of amino acid nutrients, may play a role in dauer formation. May play a role in promoting fertility. In Caenorhabditis elegans, this protein is Sodium-dependent transporter snf-5.